We begin with the raw amino-acid sequence, 116 residues long: Protein Rev (116 aa).

Phosphoserine; by host CK2 is present on Ser5. Residues 18–26 form a homomultimerization region; the sequence is IIKILYQSN. The segment at 26 to 48 is disordered; it reads NPYSKPNGSRQARRNRRRRWRAR. The short motif at 34–50 is the Nuclear localization signal and RNA-binding (RRE) element; that stretch reads SRQARRNRRRRWRARQN. A compositionally biased stretch (basic residues) spans 36–47; the sequence is QARRNRRRRWRA. The Nuclear export signal and binding to XPO1 motif lies at 73 to 84; the sequence is LQLPPIERLRLD. Ser92 carries the phosphoserine; by host modification.

Belongs to the HIV-1 REV protein family. In terms of assembly, homomultimer; when bound to the RRE. Multimeric assembly is essential for activity and may involve XPO1. Binds to human KPNB1, XPO1, TNPO1, RANBP5 and IPO7. Interacts with the viral Integrase. Interacts with human KHDRBS1. Interacts with human NAP1; this interaction decreases Rev multimerization and stimulates its activity. Interacts with human DEAD-box helicases DDX3 and DDX24; these interactions may serve for viral RNA export to the cytoplasm and packaging, respectively. Interacts with human PSIP1; this interaction may inhibit HIV-1 DNA integration by promoting dissociation of the Integrase-LEDGF/p75 complex. In terms of processing, asymmetrically arginine dimethylated at one site by host PRMT6. Methylation impairs the RNA-binding activity and export of viral RNA from the nucleus to the cytoplasm. Post-translationally, phosphorylated by protein kinase CK2. Presence of, and maybe binding to the N-terminus of the regulatory beta subunit of CK2 is necessary for CK2-mediated Rev's phosphorylation.

Its subcellular location is the host nucleus. It is found in the host nucleolus. It localises to the host cytoplasm. Escorts unspliced or incompletely spliced viral pre-mRNAs (late transcripts) out of the nucleus of infected cells. These pre-mRNAs carry a recognition sequence called Rev responsive element (RRE) located in the env gene, that is not present in fully spliced viral mRNAs (early transcripts). This function is essential since most viral proteins are translated from unspliced or partially spliced pre-mRNAs which cannot exit the nucleus by the pathway used by fully processed cellular mRNAs. Rev itself is translated from a fully spliced mRNA that readily exits the nucleus. Rev's nuclear localization signal (NLS) binds directly to KPNB1/Importin beta-1 without previous binding to KPNA1/Importin alpha-1. KPNB1 binds to the GDP bound form of RAN (Ran-GDP) and targets Rev to the nucleus. In the nucleus, the conversion from Ran-GDP to Ran-GTP dissociates Rev from KPNB1 and allows Rev's binding to the RRE in viral pre-mRNAs. Rev multimerization on the RRE via cooperative assembly exposes its nuclear export signal (NES) to the surface. Rev can then form a complex with XPO1/CRM1 and Ran-GTP, leading to nuclear export of the complex. Conversion from Ran-GTP to Ran-GDP mediates dissociation of the Rev/RRE/XPO1/RAN complex, so that Rev can return to the nucleus for a subsequent round of export. Beside KPNB1, also seems to interact with TNPO1/Transportin-1, RANBP5/IPO5 and IPO7/RANBP7 for nuclear import. The nucleoporin-like HRB/RIP is an essential cofactor that probably indirectly interacts with Rev to release HIV RNAs from the perinuclear region to the cytoplasm. This chain is Protein Rev, found in Homo sapiens (Human).